The sequence spans 254 residues: Uridine-cytidine kinase 1 (254 aa).

Residues 1-29 form a disordered region; sequence MASAGGDECEGAAPEADRPHQRPFLIGVS. Position 30 to 38 (30 to 38) interacts with ATP; that stretch reads GGTASGKST. 6 residues coordinate substrate: D87, Y115, H120, R146, R155, and Q163. D192 provides a ligand contact to ATP. The segment at 224–254 is disordered; the sequence is SYKRTFSEPGDHPGMLTSGKRSHLESSSRPH. T228 is modified (phosphothreonine). Residue S230 is modified to Phosphoserine. A compositionally biased stretch (basic and acidic residues) spans 245-254; sequence SHLESSSRPH.

Belongs to the uridine kinase family.

It carries out the reaction uridine + ATP = UMP + ADP + H(+). It catalyses the reaction cytidine + ATP = CMP + ADP + H(+). The protein operates within pyrimidine metabolism; CTP biosynthesis via salvage pathway; CTP from cytidine: step 1/3. It participates in pyrimidine metabolism; UMP biosynthesis via salvage pathway; UMP from uridine: step 1/1. Functionally, phosphorylates uridine and cytidine to uridine monophosphate and cytidine monophosphate. Does not phosphorylate deoxyribonucleosides or purine ribonucleosides. Can use ATP or GTP as a phosphate donor. This is Uridine-cytidine kinase 1 (UCK1) from Macaca fascicularis (Crab-eating macaque).